We begin with the raw amino-acid sequence, 146 residues long: Hemoglobin subunit beta (146 aa).

Position 1 is an N-acetylvaline (V1). The region spanning 2 to 146 is the Globin domain; the sequence is HLTDAEKNLV…VANALAHKYH (145 aa). H63 provides a ligand contact to heme b. At K82 the chain carries N6-acetyllysine. Position 92 (H92) interacts with heme b. An S-nitrosocysteine modification is found at C93. N6-acetyllysine is present on K144.

The protein belongs to the globin family. As to quaternary structure, heterotetramer of two alpha chains and two beta chains. In terms of tissue distribution, red blood cells.

Involved in oxygen transport from the lung to the various peripheral tissues. The protein is Hemoglobin subunit beta (HBB) of Mesocricetus brandti (Brandt's hamster).